Consider the following 546-residue polypeptide: Probable malate:quinone oxidoreductase (546 aa).

It belongs to the MQO family. FAD is required as a cofactor.

It carries out the reaction (S)-malate + a quinone = a quinol + oxaloacetate. It functions in the pathway carbohydrate metabolism; tricarboxylic acid cycle; oxaloacetate from (S)-malate (quinone route): step 1/1. The protein is Probable malate:quinone oxidoreductase of Acinetobacter baumannii (strain AB0057).